The sequence spans 311 residues: p-hydroxybenzoic acid efflux pump subunit AaeA (311 aa).

Residues 11–31 (IGITLLVVLLAVIAIFKVWAF) traverse the membrane as a helical segment.

It belongs to the membrane fusion protein (MFP) (TC 8.A.1) family.

Its subcellular location is the cell inner membrane. Functionally, forms an efflux pump with AaeB. The sequence is that of p-hydroxybenzoic acid efflux pump subunit AaeA from Yersinia enterocolitica serotype O:8 / biotype 1B (strain NCTC 13174 / 8081).